The sequence spans 288 residues: 4-diphosphocytidyl-2-C-methyl-D-erythritol kinase (288 aa).

The active site involves Lys-8. 90–100 (PVGAGLAGGSS) lines the ATP pocket. Residue Asp-132 is part of the active site.

Belongs to the GHMP kinase family. IspE subfamily.

The enzyme catalyses 4-CDP-2-C-methyl-D-erythritol + ATP = 4-CDP-2-C-methyl-D-erythritol 2-phosphate + ADP + H(+). It functions in the pathway isoprenoid biosynthesis; isopentenyl diphosphate biosynthesis via DXP pathway; isopentenyl diphosphate from 1-deoxy-D-xylulose 5-phosphate: step 3/6. Its function is as follows. Catalyzes the phosphorylation of the position 2 hydroxy group of 4-diphosphocytidyl-2C-methyl-D-erythritol. This Chlamydia trachomatis serovar L2b (strain UCH-1/proctitis) protein is 4-diphosphocytidyl-2-C-methyl-D-erythritol kinase.